The primary structure comprises 194 residues: Holliday junction branch migration complex subunit RuvA (194 aa).

Residues 1-64 are domain I; it reads MIGRLRGILA…EDSVSLYGFL (64 aa). The tract at residues 65–140 is domain II; it reads REGERRLFRD…RAADFSSGAP (76 aa). A flexible linker region spans residues 140–144; the sequence is PITGQ. Residues 145 to 194 form a domain III region; the sequence is LGPDAVSEATVALQQLGYKPAEAARMARDAGAEGDEVATVIRKALQAALR.

It belongs to the RuvA family. As to quaternary structure, homotetramer. Forms an RuvA(8)-RuvB(12)-Holliday junction (HJ) complex. HJ DNA is sandwiched between 2 RuvA tetramers; dsDNA enters through RuvA and exits via RuvB. An RuvB hexamer assembles on each DNA strand where it exits the tetramer. Each RuvB hexamer is contacted by two RuvA subunits (via domain III) on 2 adjacent RuvB subunits; this complex drives branch migration. In the full resolvosome a probable DNA-RuvA(4)-RuvB(12)-RuvC(2) complex forms which resolves the HJ.

It localises to the cytoplasm. Functionally, the RuvA-RuvB-RuvC complex processes Holliday junction (HJ) DNA during genetic recombination and DNA repair, while the RuvA-RuvB complex plays an important role in the rescue of blocked DNA replication forks via replication fork reversal (RFR). RuvA specifically binds to HJ cruciform DNA, conferring on it an open structure. The RuvB hexamer acts as an ATP-dependent pump, pulling dsDNA into and through the RuvAB complex. HJ branch migration allows RuvC to scan DNA until it finds its consensus sequence, where it cleaves and resolves the cruciform DNA. In Xanthomonas axonopodis pv. citri (strain 306), this protein is Holliday junction branch migration complex subunit RuvA.